The primary structure comprises 87 residues: Large ribosomal subunit protein bL28 (87 aa).

Belongs to the bacterial ribosomal protein bL28 family.

The protein is Large ribosomal subunit protein bL28 of Methylacidiphilum infernorum (isolate V4) (Methylokorus infernorum (strain V4)).